The following is a 516-amino-acid chain: MVRKIFQTNAELKDWLSGQNSAIIFIPTMGGLHPGHQYLIQKAKEKKTNTNQIILVSIFVNPLQFSKGEDFKKYPRNIKRDAELAFSAGADAIWAPEYDEVFPGGADSHFKIEVPKTLHNQLCGAERKGHFDGVATVIIRLIKIIKPKKLILGEKDWQQLIIIRKLFQELSIPVKIESYSTQRDQSGFAYSSRNSYLSDSERVNAQSLPNAIKEAKTEFDKGKVINLTKIASIFKENNLKIEYLKIVDPFSLKETENINRLCLLAIAVKCGSTRLIDHTFLMHRKPIIAIDGPAGAGKSTVTKAFAKKLGFIYLDTGAMYRAVTWLIISNSIDPNDQAEIKNILKDSKLEFKNSSFVEQKIFINNIDVTEKIRSPQVTSMVSEIAKQQFVREVLTRKQQVIGNNGGLVAEGRDIGTAVFPDADLKIFLTASPTERAKRRALDLHKRGYEFSSIEDLEKEIKERDKKDSERKIAPLKKAQDAIELVTDGMNIEDVLKELIDIFRSKIPEEVWPTPNS.

The pantoate--beta-alanine ligase stretch occupies residues 1–279 (MVRKIFQTNA…CGSTRLIDHT (279 aa)). Residue 29 to 36 (MGGLHPGH) coordinates ATP. Residue H36 is the Proton donor of the active site. Q64 is a (R)-pantoate binding site. Q64 contributes to the beta-alanine binding site. 153–156 (GEKD) provides a ligand contact to ATP. Residue Q159 coordinates (R)-pantoate. Residue 190 to 193 (YSSR) participates in ATP binding. A cytidylate kinase region spans residues 280 to 516 (FLMHRKPIIA…PEEVWPTPNS (237 aa)).

This sequence in the N-terminal section; belongs to the pantothenate synthetase family. In the C-terminal section; belongs to the cytidylate kinase family. Type 1 subfamily.

The protein resides in the cytoplasm. It carries out the reaction (R)-pantoate + beta-alanine + ATP = (R)-pantothenate + AMP + diphosphate + H(+). It catalyses the reaction CMP + ATP = CDP + ADP. The catalysed reaction is dCMP + ATP = dCDP + ADP. It functions in the pathway cofactor biosynthesis; (R)-pantothenate biosynthesis; (R)-pantothenate from (R)-pantoate and beta-alanine: step 1/1. In terms of biological role, catalyzes the condensation of pantoate with beta-alanine in an ATP-dependent reaction via a pantoyl-adenylate intermediate. Functionally, catalyzes the transfer of a phosphate group from ATP to either CMP or dCMP to form CDP or dCDP and ADP, respectively. The sequence is that of Bifunctional pantoate ligase/cytidylate kinase from Prochlorococcus marinus (strain NATL2A).